A 302-amino-acid polypeptide reads, in one-letter code: 33 kDa chaperonin (302 aa).

2 cysteine pairs are disulfide-bonded: cysteine 234–cysteine 236 and cysteine 267–cysteine 270.

Belongs to the HSP33 family. In terms of processing, under oxidizing conditions two disulfide bonds are formed involving the reactive cysteines. Under reducing conditions zinc is bound to the reactive cysteines and the protein is inactive.

The protein resides in the cytoplasm. Its function is as follows. Redox regulated molecular chaperone. Protects both thermally unfolding and oxidatively damaged proteins from irreversible aggregation. Plays an important role in the bacterial defense system toward oxidative stress. This Neisseria meningitidis serogroup A / serotype 4A (strain DSM 15465 / Z2491) protein is 33 kDa chaperonin.